The sequence spans 168 residues: Cell division inhibitor SulA (168 aa).

The segment at Ala-106–Tyr-112 is ftsZ binding. The tract at residues Lys-161–His-168 is lon protease binding.

The protein belongs to the SulA family. As to quaternary structure, interacts with FtsZ. Is rapidly cleaved and degraded by the Lon protease once DNA damage is repaired.

Functionally, component of the SOS system and an inhibitor of cell division. Accumulation of SulA causes rapid cessation of cell division and the appearance of long, non-septate filaments. In the presence of GTP, binds a polymerization-competent form of FtsZ in a 1:1 ratio, thus inhibiting FtsZ polymerization and therefore preventing it from participating in the assembly of the Z ring. This mechanism prevents the premature segregation of damaged DNA to daughter cells during cell division. The polypeptide is Cell division inhibitor SulA (Yersinia pestis bv. Antiqua (strain Antiqua)).